The sequence spans 506 residues: ATP synthase subunit alpha (506 aa).

170-177 (GDRQTGKT) contributes to the ATP binding site.

The protein belongs to the ATPase alpha/beta chains family. In terms of assembly, F-type ATPases have 2 components, CF(1) - the catalytic core - and CF(0) - the membrane proton channel. CF(1) has five subunits: alpha(3), beta(3), gamma(1), delta(1), epsilon(1). CF(0) has four main subunits: a(1), b(1), b'(1) and c(9-12).

The protein resides in the cellular thylakoid membrane. It catalyses the reaction ATP + H2O + 4 H(+)(in) = ADP + phosphate + 5 H(+)(out). In terms of biological role, produces ATP from ADP in the presence of a proton gradient across the membrane. The alpha chain is a regulatory subunit. This chain is ATP synthase subunit alpha, found in Synechococcus sp. (strain CC9605).